Reading from the N-terminus, the 139-residue chain is Large ribosomal subunit protein uL16 (139 aa).

Residues 1–17 (MLMPKRVKYRKTQRGRM) show a composition bias toward basic residues. The tract at residues 1–24 (MLMPKRVKYRKTQRGRMKGNSGRG) is disordered.

The protein belongs to the universal ribosomal protein uL16 family. Part of the 50S ribosomal subunit.

Its function is as follows. Binds 23S rRNA and is also seen to make contacts with the A and possibly P site tRNAs. This Pelodictyon phaeoclathratiforme (strain DSM 5477 / BU-1) protein is Large ribosomal subunit protein uL16.